The following is a 178-amino-acid chain: Orotate phosphoribosyltransferase (178 aa).

5-phospho-alpha-D-ribose 1-diphosphate contacts are provided by residues R92, K93, K96, and 118–126 (EDVITTGSS). Orotate-binding residues include T122 and R150.

The protein belongs to the purine/pyrimidine phosphoribosyltransferase family. PyrE subfamily. Homodimer. Mg(2+) is required as a cofactor.

It carries out the reaction orotidine 5'-phosphate + diphosphate = orotate + 5-phospho-alpha-D-ribose 1-diphosphate. The protein operates within pyrimidine metabolism; UMP biosynthesis via de novo pathway; UMP from orotate: step 1/2. Its function is as follows. Catalyzes the transfer of a ribosyl phosphate group from 5-phosphoribose 1-diphosphate to orotate, leading to the formation of orotidine monophosphate (OMP). The chain is Orotate phosphoribosyltransferase from Archaeoglobus fulgidus (strain ATCC 49558 / DSM 4304 / JCM 9628 / NBRC 100126 / VC-16).